Here is a 329-residue protein sequence, read N- to C-terminus: UPF0725 protein EMB2204 (329 aa).

Belongs to the UPF0725 (EMB2204) family.

Its function is as follows. May be involved in embryogenesis. In Arabidopsis thaliana (Mouse-ear cress), this protein is UPF0725 protein EMB2204 (EMB2204).